We begin with the raw amino-acid sequence, 685 residues long: Beta-taxilin (685 aa).

Residues 1–135 (MEINHPDQLS…KEPVSNKEQK (135 aa)) are disordered. Polar residues predominate over residues 18–28 (GDSSSLNQNGP). Composition is skewed to basic and acidic residues over residues 47–67 (GSLHPEKGAHDVAEELSRQLE) and 80–90 (RGKESTSETKE). Residues 98-113 (PDNEDVDYEETTEEID) show a composition bias toward acidic residues. Coiled coils occupy residues 138–354 (KKIL…VLKE) and 381–470 (NEVF…SEKE). The span at 465 to 478 (KMSEKEDQVQRTSE) shows a compositional bias: basic and acidic residues. Disordered stretches follow at residues 465–497 (KMSEKEDQVQRTSEEEPEPSVSENEEVDAEEAN) and 517–685 (EFTP…NGVD). Phosphoserine occurs at positions 477, 484, and 486. Positions 479-495 (EEPEPSVSENEEVDAEE) are enriched in acidic residues. The span at 575–591 (CEATPAPTASCTPAEAE) shows a compositional bias: low complexity. Polar residues predominate over residues 612–627 (ANTSGQAPLSPAQGSL).

It belongs to the taxilin family. As to quaternary structure, binds to the C-terminal coiled coil region of syntaxin family members STX1A, STX3A and STX4A. Has a preference for STX1A. In terms of tissue distribution, specifically expressed in skeletal muscle.

Functionally, promotes motor nerve regeneration. May be involved in intracellular vesicle traffic. This Mus musculus (Mouse) protein is Beta-taxilin (Txlnb).